Consider the following 184-residue polypeptide: NADH-quinone oxidoreductase subunit B (184 aa).

The [4Fe-4S] cluster site is built by cysteine 37, cysteine 38, cysteine 103, and cysteine 132. The disordered stretch occupies residues histidine 164–arginine 184.

The protein belongs to the complex I 20 kDa subunit family. As to quaternary structure, NDH-1 is composed of 14 different subunits. Subunits NuoB, C, D, E, F, and G constitute the peripheral sector of the complex. The cofactor is [4Fe-4S] cluster.

It is found in the cell membrane. It carries out the reaction a quinone + NADH + 5 H(+)(in) = a quinol + NAD(+) + 4 H(+)(out). In terms of biological role, NDH-1 shuttles electrons from NADH, via FMN and iron-sulfur (Fe-S) centers, to quinones in the respiratory chain. The immediate electron acceptor for the enzyme in this species is believed to be a menaquinone. Couples the redox reaction to proton translocation (for every two electrons transferred, four hydrogen ions are translocated across the cytoplasmic membrane), and thus conserves the redox energy in a proton gradient. The sequence is that of NADH-quinone oxidoreductase subunit B from Acidothermus cellulolyticus (strain ATCC 43068 / DSM 8971 / 11B).